Here is a 1741-residue protein sequence, read N- to C-terminus: S-layer protein (1741 aa).

Residues 894-904 (SFTSDSANGSG) are compositionally biased toward polar residues. The disordered stretch occupies residues 894 to 913 (SFTSDSANGSGHSVEGGTGD).

Glycosylated.

It is found in the secreted. It localises to the cell wall. Its subcellular location is the S-layer. Functionally, S-layer protein. The S-layer is a paracrystalline mono-layered assembly of proteins which coats the surface of bacteria. Under laboratory conditions, has a supportive but not a critical role in the function of the cyanobacterium. Shows no apparent hemolytic activity against sheep erythrocytes, however, a slight hemolytic activity is detected during the conformational change caused by the rebinding of Ca(2+). This chain is S-layer protein, found in Synechocystis sp. (strain ATCC 27184 / PCC 6803 / Kazusa).